The primary structure comprises 103 residues: Large ribosomal subunit protein bL21 (103 aa).

This sequence belongs to the bacterial ribosomal protein bL21 family. As to quaternary structure, part of the 50S ribosomal subunit. Contacts protein L20.

In terms of biological role, this protein binds to 23S rRNA in the presence of protein L20. This chain is Large ribosomal subunit protein bL21, found in Actinobacillus pleuropneumoniae serotype 7 (strain AP76).